A 401-amino-acid polypeptide reads, in one-letter code: Subtilisin-like protease 7 (401 aa).

The N-terminal stretch at M1–G20 is a signal peptide. The propeptide occupies A21–N119. The Inhibitor I9 domain maps to K36 to I118. A glycan (N-linked (GlcNAc...) asparagine) is linked at N58. In terms of domain architecture, Peptidase S8 spans S129 to M401. Active-site charge relay system residues include D161 and H193. N-linked (GlcNAc...) asparagine glycans are attached at residues N223 and N253. The active-site Charge relay system is S347. Residue N397 is glycosylated (N-linked (GlcNAc...) asparagine).

It belongs to the peptidase S8 family.

The protein resides in the secreted. Functionally, secreted subtilisin-like serine protease with keratinolytic activity that contributes to pathogenicity. The polypeptide is Subtilisin-like protease 7 (SUB7) (Trichophyton equinum (Horse ringworm fungus)).